The primary structure comprises 128 residues: Large ribosomal subunit protein bL17 (128 aa).

Belongs to the bacterial ribosomal protein bL17 family. As to quaternary structure, part of the 50S ribosomal subunit. Contacts protein L32.

The sequence is that of Large ribosomal subunit protein bL17 from Pseudomonas fluorescens (strain ATCC BAA-477 / NRRL B-23932 / Pf-5).